We begin with the raw amino-acid sequence, 939 residues long: Dynamin-like GTPase MGM1, mitochondrial (939 aa).

The N-terminal 27 residues, 1–27, are a transit peptide targeting the mitochondrion; it reads MSAQLRAAAAITPAARRVISGPAAVRR. The chain crosses the membrane as a helical span at residues 85–103; the sequence is FIRVPALFGGMMLGAVGWV. Residues 170-183 show a composition bias toward gly residues; that stretch reads AGEGSGSGEGGPNG. The segment at 170–196 is disordered; it reads AGEGSGSGEGGPNGGPEPPRQSRAGAA. A Dynamin-type G domain is found at 249–522; it reads TVTLPSIVVI…LEQQMSSKLN (274 aa). The G1 motif stretch occupies residues 259–266; the sequence is GSQSSGKS. GTP is bound by residues Ser-262, Gly-264, Lys-265, Ser-266, Ser-267, and Gly-281. Ser-266 is a Mg(2+) binding site. The interval 285–287 is G2 motif; that stretch reads ITR. Residues Thr-286 and Asp-359 each coordinate Mg(2+). Residues 359-362 form a G3 motif region; that stretch reads DLPG. The interval 427 to 430 is G4 motif; it reads TKMD. GTP is bound by residues Lys-428, Asp-430, and Ser-457. Residues 456-459 are G5 motif; the sequence is ISKL. The stalk region stretch occupies residues 549 to 703; it reads SAESYLAASL…TSDGIEISLK (155 aa). A paddle region region spans residues 710–809; it reads DIQPNEWAQG…LSLRIQAAKS (100 aa). The segment at 810-877 is stalk region; the sequence is RQCKTLTNKY…GGGLEKFARE (68 aa). The cysteines at positions 812 and 821 are disulfide-linked. The 95-residue stretch at 815–909 folds into the GED domain; the sequence is LTNKYYCPEV…KIEELHRISS (95 aa).

It belongs to the TRAFAC class dynamin-like GTPase superfamily. Dynamin/Fzo/YdjA family. As to quaternary structure, oligomeric complex consisting of membrane-bound and soluble forms of MGM1. In terms of processing, cleavage of the transit peptide by mitochondrial processing protease (MPP) produces a long integral membrane form of MGM1 (L-MGM1). Further processing by the rhomboid protease PCP1 produces a short peripheral membrane form of MGM1 (S-MGM1). Both forms are required for full activity.

The protein localises to the mitochondrion inner membrane. The protein resides in the mitochondrion intermembrane space. The enzyme catalyses GTP + H2O = GDP + phosphate + H(+). Dynamin-related GTPase that is essential for normal mitochondrial morphology by mediating fusion of the mitochondrial inner membranes, regulating cristae morphology and maintaining respiratory chain function. Exists in two forms: the transmembrane, long form (Dynamin-like GTPase MGM1, long form; L-MGM1), which is tethered to the inner mitochondrial membrane, and the short soluble form (Dynamin-like GTPase MGM1, short form; S-MGM1), which results from proteolytic cleavage and localizes in the intermembrane space. Both forms (L-MGM1 and S-MGM1) cooperate to catalyze the fusion of the mitochondrial inner membrane. The equilibrium between L-MGM1 and S-MGM1 is essential: excess levels of S-MGM1, following loss of mitochondrial membrane potential, lead to an impaired equilibrium between L-MGM1 and S-MGM1, inhibiting mitochondrial fusion. Plays a role in the maintenance and remodeling of mitochondrial cristae, some invaginations of the mitochondrial inner membrane that provide an increase in the surface area. Probably acts by forming helical filaments at the inside of inner membrane tubes with the shape and dimensions of crista junctions. In terms of biological role, constitutes the transmembrane long form (L-MGM1) that plays a central role in mitochondrial inner membrane fusion and cristae morphology. L-MGM1 and the soluble short form (S-MGM1) form higher-order helical assemblies that coordinate the fusion of mitochondrial inner membranes. Inner membrane-anchored L-MGM1 molecules initiate membrane remodeling by recruiting soluble S-MGM1 to rapidly polymerize into a flexible cylindrical scaffold encaging the mitochondrial inner membrane. Once at the membrane surface, the formation of S-MGM1 helices induce bilayer curvature. MGM1 dimerization through the paddle region, which inserts into cardiolipin-containing membrane, promotes GTP hydrolysis and the helical assembly of a flexible MGM1 lattice on the membrane, which drives membrane curvature and mitochondrial fusion. Its function is as follows. Constitutes the soluble short form (S-MGM1) generated by cleavage by PCP1, which plays a central role in mitochondrial inner membrane fusion and cristae morphology. The transmembrane long form (L-MGM1) and the S-MGM1 form higher-order helical assemblies that coordinate the fusion of mitochondrial inner membranes. Inner membrane-anchored L-MGM1 molecules initiate membrane remodeling by recruiting soluble S-MGM1 to rapidly polymerize into a flexible cylindrical scaffold encaging the mitochondrial inner membrane. Once at the membrane surface, the formation of S-MGM1 helices induce bilayer curvature. MGM1 dimerization through the paddle region, which inserts into cardiolipin-containing membrane, promotes GTP hydrolysis and the helical assembly of a flexible MGM1 lattice on the membrane, which drives membrane curvature and mitochondrial fusion. Excess levels of S-MGM1 produced by cleavage by PCP1 following stress conditions that induce loss of mitochondrial membrane potential, lead to an impaired equilibrium between L-MGM1 and S-MGM1, thereby inhibiting mitochondrial fusion. The polypeptide is Dynamin-like GTPase MGM1, mitochondrial (Chaetomium thermophilum (strain DSM 1495 / CBS 144.50 / IMI 039719) (Thermochaetoides thermophila)).